A 325-amino-acid polypeptide reads, in one-letter code: Ribonuclease Z (325 aa).

Zn(2+)-binding residues include His63, His65, Asp67, His68, His147, Asp218, and His276. The active-site Proton acceptor is Asp67.

This sequence belongs to the RNase Z family. Homodimer. Zn(2+) serves as cofactor.

The catalysed reaction is Endonucleolytic cleavage of RNA, removing extra 3' nucleotides from tRNA precursor, generating 3' termini of tRNAs. A 3'-hydroxy group is left at the tRNA terminus and a 5'-phosphoryl group is left at the trailer molecule.. Its function is as follows. Zinc phosphodiesterase, which displays some tRNA 3'-processing endonuclease activity. Probably involved in tRNA maturation, by removing a 3'-trailer from precursor tRNA. This Oenococcus oeni (strain ATCC BAA-331 / PSU-1) protein is Ribonuclease Z.